The primary structure comprises 522 residues: Tryptophan 2-halogenase (522 aa).

FAD-binding residues include Ala-17, Glu-36, Arg-42, His-44, Ile-45, Ser-48, Arg-103, Ile-127, and Asp-296. The chloride site is built by Ser-307 and Gly-308. Val-309 contributes to the FAD binding site.

The protein belongs to the flavin-dependent halogenase family.

Its function is as follows. Involved in the incorporation of a chlorinated tryptophan residue into halogenated forms of the secondary metabolites called chondramides. In Chondromyces crocatus, this protein is Tryptophan 2-halogenase.